We begin with the raw amino-acid sequence, 461 residues long: Toxin CfTX-B (461 aa).

An N-terminal signal peptide occupies residues 1–24 (MDPRISSRLRALALLVFVISITDG). A propeptide spanning residues 25-31 (IPNRAKR) is cleaved from the precursor.

This sequence belongs to the jellyfish toxin family. Type II subfamily. Oligomer. In terms of processing, contains 2 disulfide bonds. As to expression, nematocytes.

Its subcellular location is the secreted. The protein resides in the nematocyst. It is found in the target cell membrane. Its function is as follows. The fraction containing this toxin and CfTX-B shows potent hemolytic activity. This fraction causes minor effects on the cardiovascular system of anesthetized rats (at 25 ug/kg), since it has no significant effects on heart rate but produces relatively small increases in mean arterial pressure. This is Toxin CfTX-B from Chironex fleckeri (Australian box jellyfish).